A 436-amino-acid chain; its full sequence is Protein Z-dependent protease inhibitor (436 aa).

The N-terminal stretch at 1 to 20 (MRVVSSLFLPVLLAEVWLVS) is a signal peptide. N-linked (GlcNAc...) asparagine glycosylation is found at N23, N42, and N69. A heparin-binding region spans residues 128–145 (AGPLILPALFKRVKETFS). N-linked (GlcNAc...) asparagine glycans are attached at residues N172, N189, and N287.

The protein belongs to the serpin family. Phosphorylated by FAM20C in the extracellular medium. In terms of tissue distribution, expressed by the liver and secreted in plasma.

The protein resides in the secreted. Functionally, inhibits activity of the coagulation protease factor Xa in the presence of PROZ, calcium and phospholipids. Also inhibits factor XIa in the absence of cofactors. The polypeptide is Protein Z-dependent protease inhibitor (Serpina10) (Rattus norvegicus (Rat)).